The following is a 147-amino-acid chain: Hemoglobin subunit beta (147 aa).

Ser2 bears the N-acetylserine mark. The Globin domain occupies 3–147 (FLSAEEKNLV…VASALAHRYH (145 aa)). Ser45 carries the post-translational modification Phosphoserine. The residue at position 60 (Lys60) is an N6-acetyllysine. His64 provides a ligand contact to heme b. At Lys83 the chain carries N6-acetyllysine. His93 is a binding site for heme b. Residue Cys94 is modified to S-nitrosocysteine.

It belongs to the globin family. As to quaternary structure, heterotetramer of two alpha chains and two beta chains. Red blood cells.

Functionally, involved in oxygen transport from the lung to the various peripheral tissues. The sequence is that of Hemoglobin subunit beta (HBB) from Panthera pardus orientalis (Amur leopard).